A 449-amino-acid chain; its full sequence is MMLSTEGREGFVVKVRGLPWSCSADEVMRFFSDCKIQNGTSGIRFIYTREGRPSGEAFVELESEEEVKLALKKDRETMGHRYVEVFKSNSVEMDWVLKHTGPNSPDTANDGFVRLRGLPFGCSKEEIVQFFSGLEIVPNGMTLPVDFQGRSTGEAFVQFASQEIAEKALKKHKERIGHRYIEIFKSSRAEVRTHYDPPRKLMAMQRPGPYDRPGAGRGYNSIGRGAGFERMRRGAYGGGYGGYDDYGGYNDGYGFGSDRFGRDLNYCFSGMSDHRYGDGGSSFQSTTGHCVHMRGLPYRATENDIYNFFSPLNPMRVHIEIGPDGRVTGEADVEFATHEDAVAAMAKDKANMQHRYVELFLNSTAGTSGGAYDHSYVELFLNSTAGASGGAYGSQMMGGMGLSNQSSYGGPASQQLSGGYGGGYGGQSSMSGYDQVLQENSSDYQSNLA.

Met1 bears the N-acetylmethionine mark. Met2 is modified (N-acetylmethionine; in Heterogeneous nuclear ribonucleoprotein H2, N-terminally processed). One can recognise an RRM 1 domain in the interval 11-90 (FVVKVRGLPW…RYVEVFKSNS (80 aa)). A Phosphoserine modification is found at Ser23. Lys35 participates in a covalent cross-link: Glycyl lysine isopeptide (Lys-Gly) (interchain with G-Cter in SUMO2). Phosphoserine is present on residues Ser54 and Ser63. Lys87 is covalently cross-linked (Glycyl lysine isopeptide (Lys-Gly) (interchain with G-Cter in SUMO2)). Position 90 is a phosphoserine (Ser90). Lys98 is covalently cross-linked (Glycyl lysine isopeptide (Lys-Gly) (interchain with G-Cter in SUMO2)). Positions 111-188 (GFVRLRGLPF…RYIEIFKSSR (78 aa)) constitute an RRM 2 domain. Arg233 carries the dimethylated arginine; alternate modification. An Omega-N-methylarginine; alternate modification is found at Arg233. Residues 234–249 (GAYGGGYGGYDDYGGY) form a 1-1 repeat. The tract at residues 234–433 (GAYGGGYGGY…YGGQSSMSGY (200 aa)) is 2 X 16 AA Gly-rich approximate repeats. At Tyr246 the chain carries Phosphotyrosine. The region spanning 289-364 (HCVHMRGLPY…RYVELFLNST (76 aa)) is the RRM 3 domain. Position 310 is a phosphoserine (Ser310). 3 repeat units span residues 354 to 372 (HRYV…GGAY), 374 to 392 (HSYV…GGAY), and 418 to 433 (GGYG…MSGY). The tract at residues 354–392 (HRYVELFLNSTAGTSGGAYDHSYVELFLNSTAGASGGAY) is 2 X 19 AA perfect repeats.

Component of a ribonucleoprotein complex containing mRNAs and RNA-binding proteins including DDX5, HNRNPH2 and SRSF1 as well as splicing regulator ARVCF. Interacts with TXNL4/DIM1. Expressed ubiquitously.

Its subcellular location is the nucleus. The protein resides in the nucleoplasm. In terms of biological role, this protein is a component of the heterogeneous nuclear ribonucleoprotein (hnRNP) complexes which provide the substrate for the processing events that pre-mRNAs undergo before becoming functional, translatable mRNAs in the cytoplasm. Binds poly(RG). This chain is Heterogeneous nuclear ribonucleoprotein H2 (HNRNPH2), found in Homo sapiens (Human).